The primary structure comprises 405 residues: Arginine biosynthesis bifunctional protein ArgJ (405 aa).

Residues T152, K178, T189, E276, N400, and T405 each coordinate substrate. T189 (nucleophile) is an active-site residue.

It belongs to the ArgJ family. In terms of assembly, heterotetramer of two alpha and two beta chains.

Its subcellular location is the cytoplasm. The enzyme catalyses N(2)-acetyl-L-ornithine + L-glutamate = N-acetyl-L-glutamate + L-ornithine. The catalysed reaction is L-glutamate + acetyl-CoA = N-acetyl-L-glutamate + CoA + H(+). It participates in amino-acid biosynthesis; L-arginine biosynthesis; L-ornithine and N-acetyl-L-glutamate from L-glutamate and N(2)-acetyl-L-ornithine (cyclic): step 1/1. It functions in the pathway amino-acid biosynthesis; L-arginine biosynthesis; N(2)-acetyl-L-ornithine from L-glutamate: step 1/4. Functionally, catalyzes two activities which are involved in the cyclic version of arginine biosynthesis: the synthesis of N-acetylglutamate from glutamate and acetyl-CoA as the acetyl donor, and of ornithine by transacetylation between N(2)-acetylornithine and glutamate. This chain is Arginine biosynthesis bifunctional protein ArgJ, found in Pseudomonas savastanoi pv. phaseolicola (strain 1448A / Race 6) (Pseudomonas syringae pv. phaseolicola (strain 1448A / Race 6)).